The chain runs to 598 residues: Elongation factor 4 (598 aa).

Residues 2-184 (QHIRNFSIIA…TVVRRVPPPK (183 aa)) enclose the tr-type G domain. GTP-binding positions include 14 to 19 (DHGKST) and 131 to 134 (NKID).

It belongs to the TRAFAC class translation factor GTPase superfamily. Classic translation factor GTPase family. LepA subfamily.

The protein resides in the cell inner membrane. It catalyses the reaction GTP + H2O = GDP + phosphate + H(+). Its function is as follows. Required for accurate and efficient protein synthesis under certain stress conditions. May act as a fidelity factor of the translation reaction, by catalyzing a one-codon backward translocation of tRNAs on improperly translocated ribosomes. Back-translocation proceeds from a post-translocation (POST) complex to a pre-translocation (PRE) complex, thus giving elongation factor G a second chance to translocate the tRNAs correctly. Binds to ribosomes in a GTP-dependent manner. The polypeptide is Elongation factor 4 (Aromatoleum aromaticum (strain DSM 19018 / LMG 30748 / EbN1) (Azoarcus sp. (strain EbN1))).